A 444-amino-acid chain; its full sequence is Trigger factor (444 aa).

Positions 166-251 constitute a PPIase FKBP-type domain; sequence GDQIVIDFKG…VKAVKAPKAA (86 aa).

It belongs to the FKBP-type PPIase family. Tig subfamily.

It is found in the cytoplasm. The catalysed reaction is [protein]-peptidylproline (omega=180) = [protein]-peptidylproline (omega=0). Its function is as follows. Involved in protein export. Acts as a chaperone by maintaining the newly synthesized protein in an open conformation. Functions as a peptidyl-prolyl cis-trans isomerase. This is Trigger factor from Paracoccus denitrificans (strain Pd 1222).